The primary structure comprises 346 residues: Phosphoribosylformylglycinamidine cyclo-ligase (346 aa).

It belongs to the AIR synthase family.

It localises to the cytoplasm. The catalysed reaction is 2-formamido-N(1)-(5-O-phospho-beta-D-ribosyl)acetamidine + ATP = 5-amino-1-(5-phospho-beta-D-ribosyl)imidazole + ADP + phosphate + H(+). Its pathway is purine metabolism; IMP biosynthesis via de novo pathway; 5-amino-1-(5-phospho-D-ribosyl)imidazole from N(2)-formyl-N(1)-(5-phospho-D-ribosyl)glycinamide: step 2/2. The polypeptide is Phosphoribosylformylglycinamidine cyclo-ligase (Geobacillus thermodenitrificans (strain NG80-2)).